The sequence spans 304 residues: N-acetylmuramic acid 6-phosphate etherase (304 aa).

S2 carries the post-translational modification Phosphoserine. The SIS domain maps to 59-222 (AYESFQNGGR…STAVMVKIGK (164 aa)). Residue E87 is the Proton donor of the active site. E118 is an active-site residue.

Belongs to the GCKR-like family. MurNAc-6-P etherase subfamily. In terms of assembly, homodimer.

The catalysed reaction is N-acetyl-D-muramate 6-phosphate + H2O = N-acetyl-D-glucosamine 6-phosphate + (R)-lactate. Its pathway is amino-sugar metabolism; N-acetylmuramate degradation. Functionally, specifically catalyzes the cleavage of the D-lactyl ether substituent of MurNAc 6-phosphate, producing GlcNAc 6-phosphate and D-lactate. This Bacillus subtilis (strain 168) protein is N-acetylmuramic acid 6-phosphate etherase.